We begin with the raw amino-acid sequence, 507 residues long: Bifunctional purine biosynthesis protein PurH (507 aa).

The region spanning 1–144 (MKRALLSVSD…KNSDSVWAVV (144 aa)) is the MGS-like domain.

It belongs to the PurH family.

The catalysed reaction is (6R)-10-formyltetrahydrofolate + 5-amino-1-(5-phospho-beta-D-ribosyl)imidazole-4-carboxamide = 5-formamido-1-(5-phospho-D-ribosyl)imidazole-4-carboxamide + (6S)-5,6,7,8-tetrahydrofolate. The enzyme catalyses IMP + H2O = 5-formamido-1-(5-phospho-D-ribosyl)imidazole-4-carboxamide. The protein operates within purine metabolism; IMP biosynthesis via de novo pathway; 5-formamido-1-(5-phospho-D-ribosyl)imidazole-4-carboxamide from 5-amino-1-(5-phospho-D-ribosyl)imidazole-4-carboxamide (10-formyl THF route): step 1/1. It participates in purine metabolism; IMP biosynthesis via de novo pathway; IMP from 5-formamido-1-(5-phospho-D-ribosyl)imidazole-4-carboxamide: step 1/1. This Lacticaseibacillus casei (strain BL23) (Lactobacillus casei) protein is Bifunctional purine biosynthesis protein PurH.